The sequence spans 348 residues: GTPase Obg (348 aa).

Residues 1–159 enclose the Obg domain; sequence MKFVDEVKVH…RELVLELKLM (159 aa). The 172-residue stretch at 160 to 331 folds into the OBG-type G domain; sequence ADVGLVGLPN…LLSALVRILS (172 aa). Residues 166–173, 191–195, 213–216, 283–286, and 312–314 each bind GTP; these read GLPNAGKS, FTTLI, DIPG, NKVD, and SAR. Mg(2+)-binding residues include Ser-173 and Thr-193.

This sequence belongs to the TRAFAC class OBG-HflX-like GTPase superfamily. OBG GTPase family. Monomer. The cofactor is Mg(2+).

It is found in the cytoplasm. Functionally, an essential GTPase which binds GTP, GDP and possibly (p)ppGpp with moderate affinity, with high nucleotide exchange rates and a fairly low GTP hydrolysis rate. Plays a role in control of the cell cycle, stress response, ribosome biogenesis and in those bacteria that undergo differentiation, in morphogenesis control. The protein is GTPase Obg of Syntrophobacter fumaroxidans (strain DSM 10017 / MPOB).